The sequence spans 192 residues: GTP cyclohydrolase-2 (192 aa).

50 to 54 (RLHSE) provides a ligand contact to GTP. Positions 55, 66, and 68 each coordinate Zn(2+). GTP-binding positions include 92-94 (EGR) and T114. Residue D126 is the Proton acceptor of the active site. R128 (nucleophile) is an active-site residue. GTP is bound by residues T149 and K154.

This sequence belongs to the GTP cyclohydrolase II family. It depends on Zn(2+) as a cofactor.

It carries out the reaction GTP + 4 H2O = 2,5-diamino-6-hydroxy-4-(5-phosphoribosylamino)-pyrimidine + formate + 2 phosphate + 3 H(+). The protein operates within cofactor biosynthesis; riboflavin biosynthesis; 5-amino-6-(D-ribitylamino)uracil from GTP: step 1/4. In terms of biological role, catalyzes the conversion of GTP to 2,5-diamino-6-ribosylamino-4(3H)-pyrimidinone 5'-phosphate (DARP), formate and pyrophosphate. The chain is GTP cyclohydrolase-2 from Helicobacter pylori (strain Shi470).